We begin with the raw amino-acid sequence, 268 residues long: (+)-cis,trans-nepetalactol synthase NEPS2 (268 aa).

NAD(+) is bound by residues 16–22 (GGASGIG), 41–43 (DIQ), 65–66 (DI), N92, 163–167 (YVMSK), and 196–200 (VLTPL).

This sequence belongs to the short-chain dehydrogenases/reductases (SDR) family.

The enzyme catalyses (S)-8-oxocitronellyl enol = cis-trans-nepetalactol. Its function is as follows. Functions as a non-oxidoreductive cyclase to promote the formation of cis-trans-nepetalactol. Cis-trans-nepetalactol is then oxidized by NEPS1 into cis-trans-nepetalactone, which belongs to a family of metabolites that are both insect-repellent and have euphoric effect in cats. Binds NAD(+) as classical short-chain dehydrogenase/reductase (SDR), but does not utilize it for its redox-neutral cyclase activity. The sequence is that of (+)-cis,trans-nepetalactol synthase NEPS2 from Nepeta racemosa (Catmint).